A 188-amino-acid polypeptide reads, in one-letter code: MFNFTRQYSVKDGLITDELASHIVENLPARYASAETWKRIYSLQHDGASLQTMYLACEKEKARSGHPKGACILAVRDTDGDVFGVFIPDYLIPAPHYFGSEETFLWKYFPPKKYVHYPFVGNSNFVAYCTKSFLAFGGGNGRYSLWLDGSLEYAYSSRTPAFENNPLSYRGCPDQRIQIVDIELWVLE.

The TLDc domain maps to 13–188 (GLITDELASH…IVDIELWVLE (176 aa)).

The protein belongs to the OXR1 family.

It localises to the mitochondrion. It is found in the cytoplasm. The protein localises to the nucleus. Its function is as follows. May be involved in protection from oxidative damage. Has a role in meiosis. This is Oxidation resistance protein 1 (oxr1) from Schizosaccharomyces pombe (strain 972 / ATCC 24843) (Fission yeast).